The following is a 488-amino-acid chain: Ribosomal RNA small subunit methyltransferase F (488 aa).

S-adenosyl-L-methionine-binding positions include 135–141 (ASAPGSK), Glu159, Asp186, and Asp204. Cys257 (nucleophile) is an active-site residue.

It belongs to the class I-like SAM-binding methyltransferase superfamily. RsmB/NOP family.

It is found in the cytoplasm. The catalysed reaction is cytidine(1407) in 16S rRNA + S-adenosyl-L-methionine = 5-methylcytidine(1407) in 16S rRNA + S-adenosyl-L-homocysteine + H(+). Specifically methylates the cytosine at position 1407 (m5C1407) of 16S rRNA. The sequence is that of Ribosomal RNA small subunit methyltransferase F from Shewanella pealeana (strain ATCC 700345 / ANG-SQ1).